Reading from the N-terminus, the 221-residue chain is Urease accessory protein UreE (221 aa).

Residues 171-180 show a composition bias toward basic and acidic residues; the sequence is HHGHDHDHGH. The interval 171-221 is disordered; sequence HHGHDHDHGHSHSHSHSHSHSHSHSHDHDHDHDHEHDVKGHVHGPGCGHKH. Positions 181–193 are enriched in basic residues; the sequence is SHSHSHSHSHSHS. Positions 194-210 are enriched in basic and acidic residues; the sequence is HSHDHDHDHDHEHDVKG.

The protein belongs to the UreE family.

The protein resides in the cytoplasm. Involved in urease metallocenter assembly. Binds nickel. Probably functions as a nickel donor during metallocenter assembly. In Cupriavidus pinatubonensis (strain JMP 134 / LMG 1197) (Cupriavidus necator (strain JMP 134)), this protein is Urease accessory protein UreE.